The chain runs to 127 residues: Glycine cleavage system H protein (127 aa).

A Lipoyl-binding domain is found at 22–104; sequence KVRIGITHFA…YEKAWMIVVE (83 aa). At K63 the chain carries N6-lipoyllysine.

This sequence belongs to the GcvH family. As to quaternary structure, the glycine cleavage system is composed of four proteins: P, T, L and H. It depends on (R)-lipoate as a cofactor.

Its function is as follows. The glycine cleavage system catalyzes the degradation of glycine. The H protein shuttles the methylamine group of glycine from the P protein to the T protein. Functionally, is also involved in protein lipoylation via its role as an octanoyl/lipoyl carrier protein intermediate. The chain is Glycine cleavage system H protein from Bacillus pumilus (strain SAFR-032).